A 263-amino-acid polypeptide reads, in one-letter code: Kallikrein 1-related peptidase b24 (263 aa).

A signal peptide spans 1–17; it reads MWFLILFLALSLGGIDA. A propeptide spans 18 to 24 (activation peptide); the sequence is APPVQSR. The Peptidase S1 domain occupies 25-260; the sequence is VVGGFKCEKN…FASWIKDTMA (236 aa). Disulfide bonds link C31/C175, C50/C66, C154/C221, C186/C200, and C211/C236. H65 (charge relay system) is an active-site residue. N69 and N105 each carry an N-linked (GlcNAc...) asparagine glycan. D122 (charge relay system) is an active-site residue. Residue N185 is glycosylated (N-linked (GlcNAc...) asparagine). S215 serves as the catalytic Charge relay system.

Belongs to the peptidase S1 family. Kallikrein subfamily.

The catalysed reaction is Preferential cleavage of Arg-|-Xaa bonds in small molecule substrates. Highly selective action to release kallidin (lysyl-bradykinin) from kininogen involves hydrolysis of Met-|-Xaa or Leu-|-Xaa.. Glandular kallikreins cleave Met-Lys and Arg-Ser bonds in kininogen to release Lys-bradykinin. The polypeptide is Kallikrein 1-related peptidase b24 (Klk1b24) (Mus musculus (Mouse)).